A 280-amino-acid chain; its full sequence is Phosphatidylserine decarboxylase proenzyme (280 aa).

Active-site charge relay system; for autoendoproteolytic cleavage activity residues include Asp-88, His-145, and Ser-249. Ser-249 serves as the catalytic Schiff-base intermediate with substrate; via pyruvic acid; for decarboxylase activity. Pyruvic acid (Ser); by autocatalysis is present on Ser-249.

This sequence belongs to the phosphatidylserine decarboxylase family. PSD-B subfamily. Prokaryotic type I sub-subfamily. In terms of assembly, heterodimer of a large membrane-associated beta subunit and a small pyruvoyl-containing alpha subunit. Pyruvate serves as cofactor. In terms of processing, is synthesized initially as an inactive proenzyme. Formation of the active enzyme involves a self-maturation process in which the active site pyruvoyl group is generated from an internal serine residue via an autocatalytic post-translational modification. Two non-identical subunits are generated from the proenzyme in this reaction, and the pyruvate is formed at the N-terminus of the alpha chain, which is derived from the carboxyl end of the proenzyme. The autoendoproteolytic cleavage occurs by a canonical serine protease mechanism, in which the side chain hydroxyl group of the serine supplies its oxygen atom to form the C-terminus of the beta chain, while the remainder of the serine residue undergoes an oxidative deamination to produce ammonia and the pyruvoyl prosthetic group on the alpha chain. During this reaction, the Ser that is part of the protease active site of the proenzyme becomes the pyruvoyl prosthetic group, which constitutes an essential element of the active site of the mature decarboxylase.

The protein localises to the cell membrane. It carries out the reaction a 1,2-diacyl-sn-glycero-3-phospho-L-serine + H(+) = a 1,2-diacyl-sn-glycero-3-phosphoethanolamine + CO2. It participates in phospholipid metabolism; phosphatidylethanolamine biosynthesis; phosphatidylethanolamine from CDP-diacylglycerol: step 2/2. Catalyzes the formation of phosphatidylethanolamine (PtdEtn) from phosphatidylserine (PtdSer). The protein is Phosphatidylserine decarboxylase proenzyme of Chromobacterium violaceum (strain ATCC 12472 / DSM 30191 / JCM 1249 / CCUG 213 / NBRC 12614 / NCIMB 9131 / NCTC 9757 / MK).